Reading from the N-terminus, the 521-residue chain is Circadian clock oscillator protein KaiC (521 aa).

KaiC domains are found at residues 1–248 (MNEP…INIF) and 262–521 (ARIS…LDEE). ATP-binding residues include Gly50, Thr51, Gly52, Lys53, Thr54, Leu55, Ser90, Lys225, Leu226, Arg227, Thr229, His231, Thr241, Thr291, Gly292, Thr293, Gly294, Lys295, Thr296, and Leu297. Thr54 is a Mg(2+) binding site. Mg(2+) is bound at residue Thr296. Glu319 provides a ligand contact to Mg(2+). An ATP-binding site is contributed by Trp332. Phosphoserine; by autocatalysis is present on Ser432. Thr433 carries the post-translational modification Phosphothreonine; by autocatalysis. Arg452, Lys458, Met459, Arg460, Ser462, His464, and Lys466 together coordinate ATP.

This sequence belongs to the KaiC family. As to quaternary structure, homohexamer; hexamerization is dependent on ATP-binding. The KaiABC complex composition changes during the circadian cycle to control KaiC phosphorylation. Complexes KaiC(6), KaiA(2-4):KaiC(6), KaiB(6):KaiC(6) and KaiC(6):KaiB(6):KaiA(12) are among the most important forms, many form cooperatively. KaiC interacts with SasA, activating its autokinase function and leading to RpaA activation. It depends on Mg(2+) as a cofactor. Phosphorylated on serine and threonine residues by autocatalysis. Has a 4 step phosphorylation cycle; the autokinase acts first on Thr-433, then Ser-432. When Ser-432 is modified KaiC switches to an autophosphatase mode, acting first on phospho-Thr-433 then phospho-Ser-432.

The catalysed reaction is L-seryl-[protein] + ATP = O-phospho-L-seryl-[protein] + ADP + H(+). The enzyme catalyses L-threonyl-[protein] + ATP = O-phospho-L-threonyl-[protein] + ADP + H(+). It catalyses the reaction ATP + H2O = ADP + phosphate + H(+). With respect to regulation, the interaction with KaiA enhances its phosphorylation status, while the interaction with KaiB decreases it. Central component of the KaiABC oscillator complex, which constitutes the main circadian regulator in cyanobacteria. Complex composition changes during the circadian cycle to control KaiC phosphorylation. KaiA stimulates KaiC autophosphorylation, while KaiB sequesters KaiA, leading to KaiC autodephosphorylation. Clock output pathways impact the RpaA transcriptional regulator. KaiC enhances the autophosphorylation activity of SasA, which then transfers its phosphate group to RpaA to activate it. KaiB and KaiC together enhance the phospho-RpaA dephosphatase activity of CikA. Functionally, has a weak, temperature-independent ATPase activity; ATPase activity defines the circadian period. The phosphorylation state of KaiC modulates its ATPase activity and effects KaiB binding. This chain is Circadian clock oscillator protein KaiC, found in Rippkaea orientalis (strain PCC 8801 / RF-1) (Cyanothece sp. (strain PCC 8801)).